Consider the following 72-residue polypeptide: uncharacterized protein (72 aa).

This is an uncharacterized protein from Acidianus hospitalis (AFV-1).